Reading from the N-terminus, the 453-residue chain is Phosphoglucosamine mutase (453 aa).

The Phosphoserine intermediate role is filled by S105. Residues S105, D244, D246, and D248 each coordinate Mg(2+). S105 is modified (phosphoserine).

The protein belongs to the phosphohexose mutase family. The cofactor is Mg(2+). Post-translationally, activated by phosphorylation.

It carries out the reaction alpha-D-glucosamine 1-phosphate = D-glucosamine 6-phosphate. Its function is as follows. Catalyzes the conversion of glucosamine-6-phosphate to glucosamine-1-phosphate. In Blochmanniella pennsylvanica (strain BPEN), this protein is Phosphoglucosamine mutase.